Here is a 678-residue protein sequence, read N- to C-terminus: MFQDNPRLAQLKQKIQETLPKKEGTIKASDKGFGFLEVDSKTSYFVPPPYMKKCMHGDKVVAFIRTENEREVAEPSELIEQSLTRFIGRVKLFKGKLNVAPDHPQLKKLSLKAKTKKGLNEADFQEGDWVVAHLVRHPLKGDDGFFVQISHKITDANDKIAPWWVTLAENDLPNSEPAGIDDWQLKDDADLVREDLTALPFVTIDGESTKDMDDALYAQQLPNGDFALTIAIADPTAYITPEDEMDKVARERGFTIYLPGRNIPMLPRDLADELCSLMENQVRPALCCSVTIRKDGVIGDDIRFFAANIKSHARLVYDHVSDWLETGSSEQWQPSEEIAQVVRDLYAFSQARANWCETHAVVFPDRPDYRFELSADNDVVAIHADMRRTANRLVEESMITANICAGKTLQTTFGFGVFNTHAGFKAEKMADVVELMAVNGAPNADAETLATVEGFAALRRWLATQETSYLDNRIRKYQSYSEIGNQPLPHFAMGLDVYATWTSPIRKYGDMINHRLLKAHILGKAPVQTPDETVGEELALHRKHHKIAERNVADWLYARTLADEPAKETRFQAEIFDINRPGMRVRLLENGAMAFIPGALILDNKERIECNGEDGTILIDKEVVYKLGDVLEIVLTEVNQENRSLVGKPTQVFADLVSETQTSTEQPAEGAENNEPQA.

The RNB domain maps to 193–521 (REDLTALPFV…INHRLLKAHI (329 aa)). The 83-residue stretch at 568 to 650 (ETRFQAEIFD…ENRSLVGKPT (83 aa)) folds into the S1 motif domain. The tract at residues 658–678 (SETQTSTEQPAEGAENNEPQA) is disordered.

It belongs to the RNR ribonuclease family. RNase II subfamily.

The protein localises to the cytoplasm. It catalyses the reaction Exonucleolytic cleavage in the 3'- to 5'-direction to yield nucleoside 5'-phosphates.. In terms of biological role, involved in mRNA degradation. Hydrolyzes single-stranded polyribonucleotides processively in the 3' to 5' direction. This is Exoribonuclease 2 from Vibrio cholerae serotype O1 (strain ATCC 39541 / Classical Ogawa 395 / O395).